The chain runs to 110 residues: Integration host factor subunit alpha (110 aa).

Belongs to the bacterial histone-like protein family. In terms of assembly, heterodimer of an alpha and a beta chain.

Functionally, this protein is one of the two subunits of integration host factor, a specific DNA-binding protein that functions in genetic recombination as well as in transcriptional and translational control. This chain is Integration host factor subunit alpha, found in Methylococcus capsulatus (strain ATCC 33009 / NCIMB 11132 / Bath).